A 412-amino-acid chain; its full sequence is Putative membrane protein 337L (412 aa).

N-linked (GlcNAc...) asparagine; by host glycans are attached at residues Asn171, Asn186, Asn247, and Asn271. A helical membrane pass occupies residues 387–407; it reads VLITGIAVTGVAVLLFLLLMF.

Belongs to the IIV-6 337L family.

The protein localises to the virion membrane. This Acheta domesticus (House cricket) protein is Putative membrane protein 337L.